Consider the following 156-residue polypeptide: Persephin (156 aa).

A signal peptide spans 1–21 (MAVGKFLLGSLLLLSLQLGQG). Disulfide bonds link C66–C124, C93–C152, and C97–C154.

It belongs to the TGF-beta family. GDNF subfamily. As to quaternary structure, homodimer; disulfide-linked. Interacts with GFRA4 coreceptor and RET: forms a 2:2:2 ternary complex composed of PSPN ligand, GFRA4 and RET receptor.

It is found in the secreted. Functionally, growth factor that exhibits neurotrophic activity on mesencephalic dopaminergic and motor neurons. Acts by binding to its coreceptor, GFRA4, leading to autophosphorylation and activation of the RET receptor. This chain is Persephin, found in Homo sapiens (Human).